The primary structure comprises 368 residues: MLYYLLSYVREIYDPPGLGVINYITFRAGAAAVTALIIILVFGPKIIRFLRDKVIEPIKEEAPEEHRKKVNIPTMGGLMIILAIEVSGLLWAKIAEPFVWMVLLAIIWMGAVGFVDDYRKVVLKIKGGLSGRYKIVGQVALGLIIGGYTFFDPTLSVLLSKTTVPFIKEITVDYGIWYIPLAIFIVTAVSNAVNLTDGLDGLAAGSTAISVFSLAGFAYLTGNVKFAEYLNITYIPGAGEVTILSMAIVAACIGFLWFNSNPAEVFMGDTGSLALGSAVAVIALLIKKELLLPLIAGIFFIETLSVIIQRGYFKYTKRRDGEGKRIFRMAPLHHHFQKKGWAEQKIVIRFWIIEVLLVLTSLLTLKLR.

Transmembrane regions (helical) follow at residues 23 to 43 (YITF…LVFG), 72 to 92 (IPTM…LLWA), 94 to 114 (IAEP…AVGF), 139 to 159 (VALG…SVLL), 170 to 190 (ITVD…TAVS), 201 to 221 (GLAA…AYLT), 238 to 258 (AGEV…FLWF), 265 to 286 (VFMG…ALLI), and 345 to 365 (KIVI…LLTL).

This sequence belongs to the glycosyltransferase 4 family. MraY subfamily. Mg(2+) is required as a cofactor.

It is found in the cell inner membrane. The catalysed reaction is UDP-N-acetyl-alpha-D-muramoyl-L-alanyl-gamma-D-glutamyl-meso-2,6-diaminopimeloyl-D-alanyl-D-alanine + di-trans,octa-cis-undecaprenyl phosphate = di-trans,octa-cis-undecaprenyl diphospho-N-acetyl-alpha-D-muramoyl-L-alanyl-D-glutamyl-meso-2,6-diaminopimeloyl-D-alanyl-D-alanine + UMP. The protein operates within cell wall biogenesis; peptidoglycan biosynthesis. Functionally, catalyzes the initial step of the lipid cycle reactions in the biosynthesis of the cell wall peptidoglycan: transfers peptidoglycan precursor phospho-MurNAc-pentapeptide from UDP-MurNAc-pentapeptide onto the lipid carrier undecaprenyl phosphate, yielding undecaprenyl-pyrophosphoryl-MurNAc-pentapeptide, known as lipid I. The polypeptide is Phospho-N-acetylmuramoyl-pentapeptide-transferase (Chloroherpeton thalassium (strain ATCC 35110 / GB-78)).